We begin with the raw amino-acid sequence, 273 residues long: Embryonic polyadenylate-binding protein 2 (273 aa).

The interval 22-57 is disordered; sequence SSDPEAQGWGAWGRTEKTSLVPRAGSRAGSDKEAEE. The 78-residue stretch at 143-220 folds into the RRM domain; that stretch reads RSVFVGNVDY…RVIKVLPKRT (78 aa).

It is found in the cytoplasm. In terms of biological role, binds the poly(A) tail of mRNA. This is Embryonic polyadenylate-binding protein 2 (Pabpn1l) from Mus musculus (Mouse).